The chain runs to 321 residues: ATP-dependent 6-phosphofructokinase (321 aa).

ATP is bound at residue Gly12. Residues 22–26 (RGVVR) and 55–60 (RYSVSD) contribute to the ADP site. ATP is bound by residues 73 to 74 (RF) and 103 to 106 (GDGS). Residue Asp104 participates in Mg(2+) binding. 127-129 (TID) serves as a coordination point for substrate. Residue Asp129 is the Proton acceptor of the active site. Arg156 lines the ADP pocket. Substrate-binding positions include Arg164 and 171–173 (MGR). Residues 187–189 (GCE), Arg213, and 215–217 (KRH) each bind ADP. Substrate-binding positions include Glu224, Arg245, and 251 to 254 (HIQR).

Belongs to the phosphofructokinase type A (PFKA) family. ATP-dependent PFK group I subfamily. Prokaryotic clade 'B1' sub-subfamily. As to quaternary structure, homotetramer. It depends on Mg(2+) as a cofactor.

The protein localises to the cytoplasm. The catalysed reaction is beta-D-fructose 6-phosphate + ATP = beta-D-fructose 1,6-bisphosphate + ADP + H(+). The protein operates within carbohydrate degradation; glycolysis; D-glyceraldehyde 3-phosphate and glycerone phosphate from D-glucose: step 3/4. Its activity is regulated as follows. Allosterically activated by ADP and other diphosphonucleosides, and allosterically inhibited by phosphoenolpyruvate. Catalyzes the phosphorylation of D-fructose 6-phosphate to fructose 1,6-bisphosphate by ATP, the first committing step of glycolysis. The protein is ATP-dependent 6-phosphofructokinase of Haemophilus influenzae (strain PittEE).